We begin with the raw amino-acid sequence, 486 residues long: N-succinylglutamate 5-semialdehyde dehydrogenase (486 aa).

Residue 220–225 coordinates NAD(+); it reads GSSRTG. Catalysis depends on residues Glu243 and Cys277.

It belongs to the aldehyde dehydrogenase family. AstD subfamily.

It carries out the reaction N-succinyl-L-glutamate 5-semialdehyde + NAD(+) + H2O = N-succinyl-L-glutamate + NADH + 2 H(+). The protein operates within amino-acid degradation; L-arginine degradation via AST pathway; L-glutamate and succinate from L-arginine: step 4/5. Catalyzes the NAD-dependent reduction of succinylglutamate semialdehyde into succinylglutamate. This Shewanella baltica (strain OS223) protein is N-succinylglutamate 5-semialdehyde dehydrogenase.